The sequence spans 166 residues: Large ribosomal subunit protein uL10 (166 aa).

This sequence belongs to the universal ribosomal protein uL10 family. In terms of assembly, part of the ribosomal stalk of the 50S ribosomal subunit. The N-terminus interacts with L11 and the large rRNA to form the base of the stalk. The C-terminus forms an elongated spine to which L12 dimers bind in a sequential fashion forming a multimeric L10(L12)X complex.

Functionally, forms part of the ribosomal stalk, playing a central role in the interaction of the ribosome with GTP-bound translation factors. The sequence is that of Large ribosomal subunit protein uL10 from Geobacillus sp. (strain WCH70).